The primary structure comprises 839 residues: MNTKRAYKLQEFVAHSAAVNCLKIGRKSSRVLVTGGEDHKVNLWAIGKPNAILSLYGHSSGIDSVTFDASEGLVAAGAASGTIKLWDLEEAKVVRTLTGHRSNCVSVNFHPFGEFFASGSLDTNLKIWDIRKKGCIHTYKGHTRGVNVLRFTPDGRWIVSGGEDNVVKVWDLTAGKLLHEFKSHEGKIQSLDFHPHEFLLATGSADKTVKFWDLETFELIGSGGTETTGVRCLTFNPDGKSVLCGLQESLKIFSWEPIRCHDGVDVGWSNLSDMNVHEGKLLGCSYNQNCVGVWVVDLSRTEPMSGGATQSNSHPEKTSGSGRDQAGLNDNSSKVILGKLPGSQKVDPLLKETKSLGKLSVSQNSDPLPKDTKSTGRSSVSQSSDPLVKEPKPLGRFSATHSSDTVKESRTLSSTGSVSDSPHRVTLTSAPKSASGISTVVPNAAASKRNFGKANPKANPPVVNKEDYFPVIVPRTEPIIEQASESRAELDIIGRTMPYSLQSKAADSRRLSSSRNEPDLPTSSLLERSQSQPIEPITLQDGNTYPSDEGGSWDTAERTNKESKCRVFGRFNSRSLVRSPPRNHDENSDLISYNANRDSSPTESRKGGRLHSLVLNRERRGRFSNFEGPVSSSSGGNMTAPNSRPSNMLKQRGNHVPVDQGITSASEEDIVADIMGQHDQFVSSMHSRLAKLQVVRRYWERNDIKNSISSIEKMADNAVIADVLLIVNERPEILTLDTCTSLLPLLTALLGSNMDSHLSVCLDLLLKLVRMYGSQIYSSLSAPSSVGVDIEAEQRMERYSCCFVEFEKIKACLPSLARRGNLVAKTLHELNLTFQEVSS.

7 WD repeats span residues 14 to 54, 57 to 96, 99 to 138, 141 to 182, 184 to 222, 225 to 265, and 267 to 304; these read AHSA…AILS, GHSSGIDSVTFDASEGLVAAGAASGTIKLWDLEEAKVVRT, GHRSNCVSVNFHPFGEFFASGSLDTNLKIWDIRKKGCIHT, GHTR…HEFK, HEGKIQSLDFHPHEFLLATGSADKTVKFWDLETFELIGS, TETT…DGVD, and GWSNLSDMNVHEGKLLGCSYNQNCVGVWVVDLSRTEPM. The DWD box signature appears at 115-131; that stretch reads FFASGSLDTNLKIWDIR. 4 disordered regions span residues 303 to 340, 357 to 435, 501 to 561, and 575 to 648; these read PMSGGATQSNSHPEKTSGSGRDQAGLNDNSSKVILGKL, GKLS…KSAS, LQSK…RTNK, and SLVR…PSNM. Composition is skewed to polar residues over residues 307–334, 375–385, 411–435, 501–533, 589–602, and 630–648; these read GATQSNSHPEKTSGSGRDQAGLNDNSSK, TGRSSVSQSSD, TLSSTGSVSDSPHRVTLTSAPKSAS, LQSKAADSRRLSSSRNEPDLPTSSLLERSQSQP, DLISYNANRDSSPT, and VSSSSGGNMTAPNSRPSNM.

Belongs to the WD repeat KATNB1 family. In terms of assembly, component of KTN80-KTN1 complexes composed of a hexamer of KTN1-KTN80 heterodimers that sense microtubule (MT) geometry to confer precise MT severing. Interacts directly with AAA1/KTN1 and KTN80.1, and weakly with KTN80.4. Expressed in siliques, flowers, leaves, stems and roots.

Its subcellular location is the cytoplasm. The protein localises to the cytoskeleton. In terms of biological role, may participate in a complex which severs microtubules in an ATP-dependent manner. Microtubule severing may promote rapid reorganization of cellular microtubule arrays. Confers precision to microtubule (MT) severing by specific targeting of KTN1 to MT cleavage sites such as crossover or branching nucleation sites. Together with other KTN80s, regulates cell elongation by modulating MT organization. The polypeptide is Katanin p80 WD40 repeat-containing subunit B1 homolog KTN80.3 (Arabidopsis thaliana (Mouse-ear cress)).